The following is a 301-amino-acid chain: Nucleotide-binding protein Rfer_1653 (301 aa).

15-22 is a binding site for ATP; sequence GMSGSGKS. 64-67 lines the GTP pocket; the sequence is DVRT.

Belongs to the RapZ-like family.

Displays ATPase and GTPase activities. In Albidiferax ferrireducens (strain ATCC BAA-621 / DSM 15236 / T118) (Rhodoferax ferrireducens), this protein is Nucleotide-binding protein Rfer_1653.